The following is a 263-amino-acid chain: Dermonecrotic toxin SpaSicTox-betaIF1 (263 aa).

Mg(2+) is bound by residues E15 and D17. The Nucleophile role is filled by H31. 2 disulfides stabilise this stretch: C35/C41 and C37/C179. Residue D75 coordinates Mg(2+).

It belongs to the arthropod phospholipase D family. Class II subfamily. Mg(2+) serves as cofactor. In terms of tissue distribution, expressed by the venom gland.

The protein localises to the secreted. The catalysed reaction is an N-(acyl)-sphingosylphosphocholine = an N-(acyl)-sphingosyl-1,3-cyclic phosphate + choline. It carries out the reaction an N-(acyl)-sphingosylphosphoethanolamine = an N-(acyl)-sphingosyl-1,3-cyclic phosphate + ethanolamine. It catalyses the reaction a 1-acyl-sn-glycero-3-phosphocholine = a 1-acyl-sn-glycero-2,3-cyclic phosphate + choline. The enzyme catalyses a 1-acyl-sn-glycero-3-phosphoethanolamine = a 1-acyl-sn-glycero-2,3-cyclic phosphate + ethanolamine. Functionally, dermonecrotic toxins cleave the phosphodiester linkage between the phosphate and headgroup of certain phospholipids (sphingolipid and lysolipid substrates), forming an alcohol (often choline) and a cyclic phosphate. This toxin acts on sphingomyelin (SM). It may also act on ceramide phosphoethanolamine (CPE), lysophosphatidylcholine (LPC) and lysophosphatidylethanolamine (LPE), but not on lysophosphatidylserine (LPS), and lysophosphatidylglycerol (LPG). It acts by transphosphatidylation, releasing exclusively cyclic phosphate products as second products. Induces dermonecrosis, hemolysis, increased vascular permeability, edema, inflammatory response, and platelet aggregation. The protein is Dermonecrotic toxin SpaSicTox-betaIF1 of Sicarius patagonicus (Six-eyed sand spider).